The sequence spans 217 residues: UPF0711 protein C18orf21 homolog (217 aa).

A Phosphoserine modification is found at serine 126. Residues threonine 130 and threonine 139 each carry the phosphothreonine modification. Residues 131 to 190 (AANKASPKTPKRTAPGSANLGQSTNGSKGKSPSLTIRTPTSGQSTPICSSRNGSKRKKHF) are disordered. Over residues 149–182 (NLGQSTNGSKGKSPSLTIRTPTSGQSTPICSSRN) the composition is skewed to polar residues.

This sequence belongs to the UPF0711 family.

In Mus musculus (Mouse), this protein is UPF0711 protein C18orf21 homolog.